The sequence spans 385 residues: MAAAAARWNHVWVGTDTGILKGVNLQRKQAANFTASGQPRREEAVSALCWGAGGETQILVGCADGTVKHFSTEEGRFQGQRQCPGGEGTFRGLAQVDGTLITCVDSGILRVWTDKDKEASSDPVLELRVGPGVCRMRQDPARPHIVATGGKENALKVWDLQGSEEPLFRAKNVRNDWLDLRVPVWDQDIQFLPESQKLVTCTGYHQVRVYDPASPQRRPVLEATYGEYPLTAVTLTPEGNSVIVGNTHGQLAEIDLRQGRLLGCLKGLAGSVRGLQCHPSKPLLASCGLDRVLRIHRIRNPRGLEHKVYLKSQLNCLLLSGRDNWEDEPQEPQEPNKVPSEDTETDELWASLEAAAKRKLPDWEQTQGALQARRRKKKRPGSTSS.

WD repeat units lie at residues R40–Q80, C83–D122, R128–F168, D179–V220, T224–K266, and G267–H306. At S214 the chain carries Phosphoserine. K311 bears the N6-methyllysine mark. The interval S320–S385 is required for nucleolar and nuclear location. Positions D323 to S385 are disordered. Residues A372–S385 are compositionally biased toward basic residues.

In terms of assembly, isoform 1 interacts (through WDR repeats) with NVL; the interaction is independent of RNA or pre-60S ribosome particles. Isoform 2 does not interact with NVL. Interacts with MTREX; the interaction dissociation in a late stage of rRNA synthesis is required for appropriate maturation of pre-60S particles and depends on the ATPase activity of NVL.

It localises to the nucleus. Its subcellular location is the nucleolus. Functionally, regulatory protein of the MTREX-exosome complex involved in the synthesis of the 60S ribosomal subunit. Participates in an early cleavage of the pre-rRNA processing pathway in cooperation with NVL. The protein is WD repeat-containing protein 74 (WDR74) of Bos taurus (Bovine).